Consider the following 196-residue polypeptide: MADS-box transcription factor 32 (196 aa).

The MADS-box domain occupies 1-61 (MGRGRSEIKR…GKLYHFLSPT (61 aa)). One can recognise a K-box domain in the interval 85 to 175 (RQERRAELEK…CDKIAHAQTL (91 aa)).

Its subcellular location is the nucleus. In terms of biological role, probable transcription factor. This Oryza sativa subsp. japonica (Rice) protein is MADS-box transcription factor 32 (MADS32).